The chain runs to 445 residues: Phosphoglucosamine mutase (445 aa).

S102 acts as the Phosphoserine intermediate in catalysis. Residues S102, D241, D243, and D245 each contribute to the Mg(2+) site. S102 bears the Phosphoserine mark.

It belongs to the phosphohexose mutase family. The cofactor is Mg(2+). Post-translationally, activated by phosphorylation.

It carries out the reaction alpha-D-glucosamine 1-phosphate = D-glucosamine 6-phosphate. In terms of biological role, catalyzes the conversion of glucosamine-6-phosphate to glucosamine-1-phosphate. This is Phosphoglucosamine mutase from Cronobacter sakazakii (strain ATCC BAA-894) (Enterobacter sakazakii).